A 217-amino-acid chain; its full sequence is Small ribosomal subunit protein uS3c (217 aa).

Residues 39 to 109 (IRSCIEKQLH…QIRINLIEIT (71 aa)) form the KH type-2 domain.

It belongs to the universal ribosomal protein uS3 family. In terms of assembly, part of the 30S ribosomal subunit.

The protein localises to the plastid. The protein resides in the chloroplast. This Gracilaria tenuistipitata var. liui (Red alga) protein is Small ribosomal subunit protein uS3c (rps3).